Consider the following 191-residue polypeptide: Shikimate kinase (191 aa).

14 to 19 is a binding site for ATP; sequence GSGKST. Position 18 (S18) interacts with Mg(2+). Residues D36, R60, and G82 each coordinate substrate. Residue R120 coordinates ATP. Substrate is bound at residue R147.

It belongs to the shikimate kinase family. Monomer. The cofactor is Mg(2+).

The protein resides in the cytoplasm. It carries out the reaction shikimate + ATP = 3-phosphoshikimate + ADP + H(+). It participates in metabolic intermediate biosynthesis; chorismate biosynthesis; chorismate from D-erythrose 4-phosphate and phosphoenolpyruvate: step 5/7. In terms of biological role, catalyzes the specific phosphorylation of the 3-hydroxyl group of shikimic acid using ATP as a cosubstrate. The protein is Shikimate kinase of Chlorobaculum tepidum (strain ATCC 49652 / DSM 12025 / NBRC 103806 / TLS) (Chlorobium tepidum).